The chain runs to 456 residues: NADH oxidase (456 aa).

Asn-10 contributes to the FAD binding site. Catalysis depends on His-11, which acts as the Proton acceptor. FAD is bound by residues Ala-12, Asp-34, Gln-35, Cys-44, Val-81, Ala-110, Ser-113, Lys-143, and Tyr-170. Cys-44 (redox-active) is an active-site residue. The residue at position 44 (Cys-44) is a Cysteine sulfinic acid (-SO2H). NAD(+)-binding residues include Ile-171, Asp-190, Tyr-199, and Gly-254. An FAD-binding site is contributed by Asp-292. Ala-308 serves as a coordination point for NAD(+). The FAD site is built by Leu-309, Ala-310, and Ser-311. Gly-339 lines the NAD(+) pocket. Phe-436 provides a ligand contact to FAD.

FAD is required as a cofactor.

It carries out the reaction 2 NADH + O2 + 2 H(+) = 2 NAD(+) + 2 H2O. In terms of biological role, catalyzes the four-electron reduction of molecular oxygen to water. This Streptococcus pyogenes serotype M6 (strain ATCC BAA-946 / MGAS10394) protein is NADH oxidase.